Consider the following 261-residue polypeptide: Kallikrein 1-related peptidase b11 (261 aa).

Residues 1-18 form the signal peptide; that stretch reads MWFLILFLALSLGGIDAA. A propeptide spans 19 to 24 (activation peptide); it reads PPVQSR. The Peptidase S1 domain maps to 25–258; that stretch reads IVGGFNCEKN…FTNWIKDTMA (234 aa). Disulfide bonds link C31–C173, C50–C66, C152–C219, C184–C198, and C209–C234. Catalysis depends on H65, which acts as the Charge relay system. N102 is a glycosylation site (N-linked (GlcNAc...) asparagine). D120 (charge relay system) is an active-site residue. Residue S213 is the Charge relay system of the active site.

The protein belongs to the peptidase S1 family. Kallikrein subfamily.

The catalysed reaction is Preferential cleavage of Arg-|-Xaa bonds in small molecule substrates. Highly selective action to release kallidin (lysyl-bradykinin) from kininogen involves hydrolysis of Met-|-Xaa or Leu-|-Xaa.. Functionally, glandular kallikreins cleave Met-Lys and Arg-Ser bonds in kininogen to release Lys-bradykinin. The protein is Kallikrein 1-related peptidase b11 (Klk1b11) of Mus musculus (Mouse).